Consider the following 1269-residue polypeptide: Histone-lysine N-methyltransferase SETDB1 (1269 aa).

Residues 9 to 63 (KELGISMDDLRELIDRELEKIEFVKQRKAQLLEMEQLVKQKEAEVDHVDKLFDNA) are a coiled coil. Disordered regions lie at residues 85–121 (YKESSSEDEGSSKPTEVIEIPDEDDDDVMSVGSGEAV) and 153–188 (QKKSDGPQTRFSSHPSSPTSSVGGSNQASASNDMSK). Residues 103 to 112 (EIPDEDDDDV) show a composition bias toward acidic residues. The segment covering 164 to 177 (SSHPSSPTSSVGGS) has biased composition (low complexity). 2 Tudor domains span residues 250–312 (ENLT…RPWS) and 340–395 (VLLK…MFSM). Residues 396 to 414 (KTSNASTQEKQQAGQQRTR) are compositionally biased toward polar residues. The tract at residues 396–516 (KTSNASTQEK…FQSNQSVQPV (121 aa)) is disordered. The segment covering 462 to 476 (DSQQAQSKKQVAKKS) has biased composition (low complexity). Residues 486-497 (SGQSSPIPTESV) show a composition bias toward polar residues. In terms of domain architecture, MBD spans 620–691 (HRGKNPLLVP…EMFCLDPYVL (72 aa)). In terms of domain architecture, Pre-SET spans 753–826 (VGCDCTDGCR…MCNNRLVQHG (74 aa)). Residues Cys-755, Cys-757, Cys-761, Cys-767, Cys-769, Cys-807, Cys-811, Cys-813, and Cys-818 each coordinate Zn(2+). In terms of domain architecture, SET spans 829 to 1244 (VRLQLFKTQN…AGTELTWDYN (416 aa)). Residues 839-841 (KGW), Asp-877, and Tyr-879 each bind S-adenosyl-L-methionine. Residues 894-1139 (EGYESDAKSS…VAASAGPVKR (246 aa)) form a disordered region. The segment covering 919–932 (SGSEDQEESNDSSD) has biased composition (acidic residues). Composition is skewed to basic and acidic residues over residues 968–989 (ASKDSRTRDETTDCKLPEETSK) and 1021–1033 (ETDKPKESEEASK). Positions 1078–1094 (TEEVLTLSSSSDSEVGS) are enriched in low complexity. Residues 1106–1120 (ATANDSDDIQTISSG) are compositionally biased toward polar residues. Residues Arg-1198 and 1201 to 1202 (NH) contribute to the S-adenosyl-L-methionine site. The Zn(2+) site is built by Cys-1204, Cys-1257, Cys-1259, and Cys-1264. Residues 1253-1269 (KKLLCCCGSTECRGRLL) form the Post-SET domain.

Belongs to the class V-like SAM-binding methyltransferase superfamily. Histone-lysine methyltransferase family. Suvar3-9 subfamily.

The protein resides in the nucleus. The protein localises to the chromosome. It catalyses the reaction N(6),N(6)-dimethyl-L-lysyl(9)-[histone H3] + S-adenosyl-L-methionine = N(6),N(6),N(6)-trimethyl-L-lysyl(9)-[histone H3] + S-adenosyl-L-homocysteine + H(+). Histone methyltransferase that specifically trimethylates 'Lys-9' of histone H3. H3 'Lys-9' trimethylation represents a specific tag for epigenetic transcriptional repression by recruiting HP1 (CBX1, CBX3 and/or CBX5) proteins to methylated histones. Mainly functions in euchromatin regions, thereby playing a central role in the silencing of euchromatic genes. H3 'Lys-9' trimethylation is coordinated with DNA methylation. Plays a role in promoter hypermethylation and transcriptional silencing of tumor suppressor genes (TSGs) or other tumor-related genes. Also required to maintain a transcriptionally repressive state of genes in undifferentiated embryonic stem cells (ESCs). Associates at promoter regions of tumor suppressor genes (TSGs) leading to their gene silencing. This chain is Histone-lysine N-methyltransferase SETDB1 (setdb1), found in Xenopus laevis (African clawed frog).